Here is a 380-residue protein sequence, read N- to C-terminus: 3-isopropylmalate dehydratase large subunit 2 (380 aa).

[4Fe-4S] cluster-binding residues include cysteine 262, cysteine 320, and cysteine 323.

This sequence belongs to the aconitase/IPM isomerase family. LeuC type 2 subfamily. In terms of assembly, heterodimer of LeuC and LeuD. The cofactor is [4Fe-4S] cluster.

It carries out the reaction (2R,3S)-3-isopropylmalate = (2S)-2-isopropylmalate. It functions in the pathway amino-acid biosynthesis; L-leucine biosynthesis; L-leucine from 3-methyl-2-oxobutanoate: step 2/4. Its function is as follows. Catalyzes the isomerization between 2-isopropylmalate and 3-isopropylmalate, via the formation of 2-isopropylmaleate. In Pyrococcus furiosus (strain ATCC 43587 / DSM 3638 / JCM 8422 / Vc1), this protein is 3-isopropylmalate dehydratase large subunit 2.